We begin with the raw amino-acid sequence, 92 residues long: UPF0235 protein CCA_00247 (92 aa).

This sequence belongs to the UPF0235 family.

The polypeptide is UPF0235 protein CCA_00247 (Chlamydia caviae (strain ATCC VR-813 / DSM 19441 / 03DC25 / GPIC) (Chlamydophila caviae)).